The following is a 223-amino-acid chain: Thiamine-phosphate synthase (223 aa).

4-amino-2-methyl-5-(diphosphooxymethyl)pyrimidine contacts are provided by residues 45–49 (QYREK) and N77. Mg(2+) is bound by residues D78 and D97. T116 serves as a coordination point for 4-amino-2-methyl-5-(diphosphooxymethyl)pyrimidine. Residue 142 to 144 (SYT) participates in 2-[(2R,5Z)-2-carboxy-4-methylthiazol-5(2H)-ylidene]ethyl phosphate binding. Residue K145 participates in 4-amino-2-methyl-5-(diphosphooxymethyl)pyrimidine binding. 2-[(2R,5Z)-2-carboxy-4-methylthiazol-5(2H)-ylidene]ethyl phosphate is bound by residues G173 and 193–194 (VT).

It belongs to the thiamine-phosphate synthase family. It depends on Mg(2+) as a cofactor.

It carries out the reaction 2-[(2R,5Z)-2-carboxy-4-methylthiazol-5(2H)-ylidene]ethyl phosphate + 4-amino-2-methyl-5-(diphosphooxymethyl)pyrimidine + 2 H(+) = thiamine phosphate + CO2 + diphosphate. The catalysed reaction is 2-(2-carboxy-4-methylthiazol-5-yl)ethyl phosphate + 4-amino-2-methyl-5-(diphosphooxymethyl)pyrimidine + 2 H(+) = thiamine phosphate + CO2 + diphosphate. It catalyses the reaction 4-methyl-5-(2-phosphooxyethyl)-thiazole + 4-amino-2-methyl-5-(diphosphooxymethyl)pyrimidine + H(+) = thiamine phosphate + diphosphate. Its pathway is cofactor biosynthesis; thiamine diphosphate biosynthesis; thiamine phosphate from 4-amino-2-methyl-5-diphosphomethylpyrimidine and 4-methyl-5-(2-phosphoethyl)-thiazole: step 1/1. In terms of biological role, condenses 4-methyl-5-(beta-hydroxyethyl)thiazole monophosphate (THZ-P) and 2-methyl-4-amino-5-hydroxymethyl pyrimidine pyrophosphate (HMP-PP) to form thiamine monophosphate (TMP). This chain is Thiamine-phosphate synthase, found in Dictyoglomus turgidum (strain DSM 6724 / Z-1310).